A 436-amino-acid polypeptide reads, in one-letter code: GTPase Der (436 aa).

2 EngA-type G domains span residues 4–167 and 175–351; these read PVVA…PKDA and IKFS…DNHE. Residues 10-17, 57-61, 119-122, 181-188, 229-233, and 294-297 contribute to the GTP site; these read GRPNVGKS, DTGGI, NKVD, DTAGI, and NKWD. Positions 352 to 436 constitute a KH-like domain; that stretch reads QRISSAVLND…PIHIIERRRK (85 aa).

Belongs to the TRAFAC class TrmE-Era-EngA-EngB-Septin-like GTPase superfamily. EngA (Der) GTPase family. Associates with the 50S ribosomal subunit.

Its function is as follows. GTPase that plays an essential role in the late steps of ribosome biogenesis. The protein is GTPase Der of Ligilactobacillus salivarius (strain UCC118) (Lactobacillus salivarius).